The sequence spans 118 residues: UPF0295 protein BCE_0593 (118 aa).

2 consecutive transmembrane segments (helical) span residues 12-32 (IRTF…LGVF) and 43-63 (FMMV…WIGM).

The protein belongs to the UPF0295 family.

Its subcellular location is the cell membrane. The chain is UPF0295 protein BCE_0593 from Bacillus cereus (strain ATCC 10987 / NRS 248).